A 361-amino-acid polypeptide reads, in one-letter code: Ribosomal RNA large subunit methyltransferase M (361 aa).

S-adenosyl-L-methionine is bound by residues Ser-186, 219-222 (CPGG), Asp-238, Asp-258, and Asp-275. Lys-304 serves as the catalytic Proton acceptor.

The protein belongs to the class I-like SAM-binding methyltransferase superfamily. RNA methyltransferase RlmE family. RlmM subfamily. Monomer.

The protein localises to the cytoplasm. The catalysed reaction is cytidine(2498) in 23S rRNA + S-adenosyl-L-methionine = 2'-O-methylcytidine(2498) in 23S rRNA + S-adenosyl-L-homocysteine + H(+). Functionally, catalyzes the 2'-O-methylation at nucleotide C2498 in 23S rRNA. The protein is Ribosomal RNA large subunit methyltransferase M of Pseudoalteromonas translucida (strain TAC 125).